Reading from the N-terminus, the 420-residue chain is Serine hydroxymethyltransferase (420 aa).

(6S)-5,6,7,8-tetrahydrofolate contacts are provided by residues leucine 117 and 121–123; that span reads GHL. Position 226 is an N6-(pyridoxal phosphate)lysine (lysine 226).

This sequence belongs to the SHMT family. In terms of assembly, homodimer. Pyridoxal 5'-phosphate serves as cofactor.

It is found in the cytoplasm. The enzyme catalyses (6R)-5,10-methylene-5,6,7,8-tetrahydrofolate + glycine + H2O = (6S)-5,6,7,8-tetrahydrofolate + L-serine. Its pathway is one-carbon metabolism; tetrahydrofolate interconversion. It participates in amino-acid biosynthesis; glycine biosynthesis; glycine from L-serine: step 1/1. Catalyzes the reversible interconversion of serine and glycine with tetrahydrofolate (THF) serving as the one-carbon carrier. This reaction serves as the major source of one-carbon groups required for the biosynthesis of purines, thymidylate, methionine, and other important biomolecules. Also exhibits THF-independent aldolase activity toward beta-hydroxyamino acids, producing glycine and aldehydes, via a retro-aldol mechanism. This chain is Serine hydroxymethyltransferase, found in Rhodopirellula baltica (strain DSM 10527 / NCIMB 13988 / SH1).